The sequence spans 100 residues: Large ribosomal subunit protein uL23 (100 aa).

The protein belongs to the universal ribosomal protein uL23 family. Part of the 50S ribosomal subunit. Contacts protein L29, and trigger factor when it is bound to the ribosome.

One of the early assembly proteins it binds 23S rRNA. One of the proteins that surrounds the polypeptide exit tunnel on the outside of the ribosome. Forms the main docking site for trigger factor binding to the ribosome. In Buchnera aphidicola subsp. Acyrthosiphon pisum (strain 5A), this protein is Large ribosomal subunit protein uL23.